The chain runs to 193 residues: Phosphoheptose isomerase (193 aa).

Residues 37–193 (LADSFKAGGK…QLIEKEMVKA (157 aa)) form the SIS domain. Substrate is bound at residue 52–54 (NGG). Positions 61 and 65 each coordinate Zn(2+). Residues Glu-65, 93-94 (ND), 119-121 (STS), Ser-124, and Gln-172 contribute to the substrate site. Residues Gln-172 and His-180 each contribute to the Zn(2+) site.

Belongs to the SIS family. GmhA subfamily. As to quaternary structure, homotetramer. Zn(2+) serves as cofactor.

It is found in the cytoplasm. It catalyses the reaction 2 D-sedoheptulose 7-phosphate = D-glycero-alpha-D-manno-heptose 7-phosphate + D-glycero-beta-D-manno-heptose 7-phosphate. It functions in the pathway carbohydrate biosynthesis; D-glycero-D-manno-heptose 7-phosphate biosynthesis; D-glycero-alpha-D-manno-heptose 7-phosphate and D-glycero-beta-D-manno-heptose 7-phosphate from sedoheptulose 7-phosphate: step 1/1. Its function is as follows. Catalyzes the isomerization of sedoheptulose 7-phosphate in D-glycero-D-manno-heptose 7-phosphate. This chain is Phosphoheptose isomerase, found in Serratia proteamaculans (strain 568).